A 348-amino-acid chain; its full sequence is Anthranilate phosphoribosyltransferase (348 aa).

5-phospho-alpha-D-ribose 1-diphosphate-binding positions include glycine 81, 84–85, threonine 89, 91–94, 109–117, and serine 121; these read GD, NIST, and KHGNRAMSS. Position 81 (glycine 81) interacts with anthranilate. Serine 93 lines the Mg(2+) pocket. An anthranilate-binding site is contributed by asparagine 112. Arginine 167 provides a ligand contact to anthranilate. Mg(2+) is bound by residues aspartate 226 and glutamate 227.

This sequence belongs to the anthranilate phosphoribosyltransferase family. Homodimer. It depends on Mg(2+) as a cofactor.

It carries out the reaction N-(5-phospho-beta-D-ribosyl)anthranilate + diphosphate = 5-phospho-alpha-D-ribose 1-diphosphate + anthranilate. The protein operates within amino-acid biosynthesis; L-tryptophan biosynthesis; L-tryptophan from chorismate: step 2/5. Catalyzes the transfer of the phosphoribosyl group of 5-phosphorylribose-1-pyrophosphate (PRPP) to anthranilate to yield N-(5'-phosphoribosyl)-anthranilate (PRA). The chain is Anthranilate phosphoribosyltransferase from Thermomicrobium roseum (strain ATCC 27502 / DSM 5159 / P-2).